The primary structure comprises 185 residues: MIEDIQEDADRRMAKAVESLKHDLARLRTGRAHTSLLDQVNVEYYGMEVPIKQAANVSVEDSRTLAVTPFEKHMVPAIEKAIMASNLGLSPVSAGQVIRVPLPSLTEDRRKEMVRLVKNEAEQARVAIRNVRRDANSDLKDLAKGKDITEDEERRAQEAIQKLTDRYVAQVDDLLEEKERELMEV.

Belongs to the RRF family.

It localises to the cytoplasm. Its function is as follows. Responsible for the release of ribosomes from messenger RNA at the termination of protein biosynthesis. May increase the efficiency of translation by recycling ribosomes from one round of translation to another. This Halorhodospira halophila (strain DSM 244 / SL1) (Ectothiorhodospira halophila (strain DSM 244 / SL1)) protein is Ribosome-recycling factor.